Reading from the N-terminus, the 583-residue chain is Phosphoglucomutase, cytoplasmic 2 (583 aa).

Residues Arg25 and Ser124 each coordinate alpha-D-glucose 1,6-bisphosphate. Ser124 acts as the Phosphoserine intermediate in catalysis. Mg(2+) contacts are provided by Ser124, Asp300, Asp302, and Asp304. Ser124 is modified (phosphoserine). Residues Asp304, Arg305, Thr368, Glu387, Ser389, and Lys400 each contribute to the alpha-D-glucose 1,6-bisphosphate site.

Belongs to the phosphohexose mutase family. As to quaternary structure, monomer. Mg(2+) is required as a cofactor.

It is found in the cytoplasm. The catalysed reaction is alpha-D-glucose 1-phosphate = alpha-D-glucose 6-phosphate. It catalyses the reaction O-phospho-L-seryl-[protein] + alpha-D-glucose 1-phosphate = alpha-D-glucose 1,6-bisphosphate + L-seryl-[protein]. The enzyme catalyses alpha-D-glucose 1,6-bisphosphate + L-seryl-[protein] = O-phospho-L-seryl-[protein] + alpha-D-glucose 6-phosphate. Catalyzes the reversible isomerization of alpha-D-glucose 1-phosphate to alpha-D-glucose 6-phosphate. The mechanism proceeds via the intermediate compound alpha-D-glucose 1,6-bisphosphate. This enzyme participates in both the breakdown and synthesis of glucose. In Zea mays (Maize), this protein is Phosphoglucomutase, cytoplasmic 2.